The primary structure comprises 388 residues: tRNA (guanine(26)-N(2))-dimethyltransferase (388 aa).

The 380-residue stretch at 4-383 (RTIVEGTTKI…APIAEIKKII (380 aa)) folds into the Trm1 methyltransferase domain. Arg-41, Arg-78, Asp-94, and Ala-123 together coordinate S-adenosyl-L-methionine. Residues Cys-251, Cys-254, Cys-271, and Cys-274 each contribute to the Zn(2+) site.

Belongs to the class I-like SAM-binding methyltransferase superfamily. Trm1 family.

The enzyme catalyses guanosine(26) in tRNA + 2 S-adenosyl-L-methionine = N(2)-dimethylguanosine(26) in tRNA + 2 S-adenosyl-L-homocysteine + 2 H(+). In terms of biological role, dimethylates a single guanine residue at position 26 of a number of tRNAs using S-adenosyl-L-methionine as donor of the methyl groups. The chain is tRNA (guanine(26)-N(2))-dimethyltransferase from Methanosarcina mazei (strain ATCC BAA-159 / DSM 3647 / Goe1 / Go1 / JCM 11833 / OCM 88) (Methanosarcina frisia).